Here is a 674-residue protein sequence, read N- to C-terminus: Methionine--tRNA ligase (674 aa).

A 'HIGH' region motif is present at residues proline 12–histidine 22. Residues cysteine 143, cysteine 146, cysteine 156, and cysteine 159 each coordinate Zn(2+). A 'KMSKS' region motif is present at residues lysine 328–serine 332. Lysine 331 contributes to the ATP binding site. One can recognise a tRNA-binding domain in the interval serine 573–lysine 674.

This sequence belongs to the class-I aminoacyl-tRNA synthetase family. MetG type 1 subfamily. In terms of assembly, homodimer. Requires Zn(2+) as cofactor.

It localises to the cytoplasm. The catalysed reaction is tRNA(Met) + L-methionine + ATP = L-methionyl-tRNA(Met) + AMP + diphosphate. In terms of biological role, is required not only for elongation of protein synthesis but also for the initiation of all mRNA translation through initiator tRNA(fMet) aminoacylation. The chain is Methionine--tRNA ligase from Nitrosococcus oceani (strain ATCC 19707 / BCRC 17464 / JCM 30415 / NCIMB 11848 / C-107).